Consider the following 185-residue polypeptide: MLNEIFNKQKTQSEKSLEALKKDFTTLRTGKVNIHILDHITVDYYGTQTPLNQVATVLASDASTISITPWEKPLLKTIESAIAAANIGVNPNNDGESVKLFFPPMTREQREENVKQAKAMGEKAKVSIRNIRKDANDAVKKLEKDKAISEDEAKKAYDEVQKLTDTYTTKIDEGVKSKESELLKV.

This sequence belongs to the RRF family.

The protein resides in the cytoplasm. Responsible for the release of ribosomes from messenger RNA at the termination of protein biosynthesis. May increase the efficiency of translation by recycling ribosomes from one round of translation to another. The polypeptide is Ribosome-recycling factor (Campylobacter jejuni subsp. jejuni serotype O:2 (strain ATCC 700819 / NCTC 11168)).